Consider the following 290-residue polypeptide: 4-diphosphocytidyl-2-C-methyl-D-erythritol kinase (290 aa).

Lysine 8 is a catalytic residue. 92–102 (PISAGLAGGST) contacts ATP. Residue aspartate 134 is part of the active site.

Belongs to the GHMP kinase family. IspE subfamily.

It catalyses the reaction 4-CDP-2-C-methyl-D-erythritol + ATP = 4-CDP-2-C-methyl-D-erythritol 2-phosphate + ADP + H(+). The protein operates within isoprenoid biosynthesis; isopentenyl diphosphate biosynthesis via DXP pathway; isopentenyl diphosphate from 1-deoxy-D-xylulose 5-phosphate: step 3/6. In terms of biological role, catalyzes the phosphorylation of the position 2 hydroxy group of 4-diphosphocytidyl-2C-methyl-D-erythritol. The sequence is that of 4-diphosphocytidyl-2-C-methyl-D-erythritol kinase from Caldicellulosiruptor saccharolyticus (strain ATCC 43494 / DSM 8903 / Tp8T 6331).